Reading from the N-terminus, the 1163-residue chain is Zinc finger protein 516 (1163 aa).

Over residues 1–13 (MDRNREAEMELRR) the composition is skewed to basic and acidic residues. A disordered region spans residues 1–26 (MDRNREAEMELRRGPSPTRAGRGHEV). Residues 1-431 (MDRNREAEME…ATRGKVAEPA (431 aa)) form a mediates promoter DNA-binding and activation of transcription region. 7 consecutive C2H2-type zinc fingers follow at residues 34-56 (HTCC…MRKH), 62-84 (YKCP…IRSH), 174-197 (VQCS…HQAH), 200-223 (FKCR…ERDH), 248-270 (FPCE…MKKH), 276-298 (HGCH…MKAH), and 335-357 (EVCA…NAIH). A compositionally biased stretch (basic and acidic residues) spans 460 to 469 (SQEKRKREQD). Disordered stretches follow at residues 460 to 512 (SQEK…TGQG), 533 to 667 (HSRV…QEQH), and 679 to 730 (HPKQ…APDL). Positions 496–507 (RSAARPNRRAAA) are enriched in low complexity. The C2H2-type 8 zinc finger occupies 515–537 (SECFECGKIFRTYHQMVLHSRVH). Positions 542–552 (RERDSDGDRAA) are enriched in basic and acidic residues. Residues 561–572 (EGDSASQPSSPG) are compositionally biased toward polar residues. Residues 588–598 (EAAEDSGEEGA) show a composition bias toward acidic residues. Residues 615-625 (EVTSTELSSGD) are compositionally biased toward polar residues. Residues 626–641 (QSHKMGDNASERDTGE) are compositionally biased toward basic and acidic residues. Lysine 643 is covalently cross-linked (Glycyl lysine isopeptide (Lys-Gly) (interchain with G-Cter in SUMO2)). Residues 656 to 667 (SSRETSRRQEQH) are compositionally biased toward basic and acidic residues. Residue lysine 681 forms a Glycyl lysine isopeptide (Lys-Gly) (interchain with G-Cter in SUMO2) linkage. The segment covering 706-720 (PAEKLSDLHNKEHSG) has biased composition (basic and acidic residues). The C2H2-type 9; atypical zinc finger occupies 760–783 (HPCPYCSHKTYYPEVLWMHKRIWH). The tract at residues 838–1007 (TQVPGGMPGS…PPREPPSKAA (170 aa)) is disordered. Low complexity predominate over residues 840 to 857 (VPGGMPGSKSGSSPLGVV). Residues lysine 1043 and lysine 1062 each participate in a glycyl lysine isopeptide (Lys-Gly) (interchain with G-Cter in SUMO2) cross-link. A C2H2-type 10 zinc finger spans residues 1098 to 1120 (FVCIECGKSFHQPGHLRAHMRAH). A disordered region spans residues 1126 to 1163 (SDGPRGSEVHTTSADAPKQGRDHSNTGTVQTVPLRKGT).

It belongs to the krueppel C2H2-type zinc-finger protein family. Interacts with PRDM16; the interaction is direct and may play a role in the transcription of brown adipose tissue-specific genes. Interacts with PWWP2B. Interacts with HDAC1; this interaction is enhanced in the presence of PWWP2B.

It localises to the nucleus. Functionally, transcriptional regulator that binds to the promoter and activates the transcription of genes promoting brown adipose tissue (BAT) differentiation. Among brown adipose tissue-specific genes, binds the proximal region of the promoter of the UCP1 gene to activate its transcription and thereby regulate thermogenesis. May also play a role in the cellular response to replication stress. This chain is Zinc finger protein 516, found in Homo sapiens (Human).